We begin with the raw amino-acid sequence, 361 residues long: Chorismate synthase (361 aa).

Residues Arg48 and Arg54 each contribute to the NADP(+) site. FMN contacts are provided by residues 125 to 127 (RSS), 238 to 239 (NA), Gly278, 293 to 297 (KPTSS), and Arg319.

The protein belongs to the chorismate synthase family. Homotetramer. The cofactor is FMNH2.

The catalysed reaction is 5-O-(1-carboxyvinyl)-3-phosphoshikimate = chorismate + phosphate. The protein operates within metabolic intermediate biosynthesis; chorismate biosynthesis; chorismate from D-erythrose 4-phosphate and phosphoenolpyruvate: step 7/7. Its function is as follows. Catalyzes the anti-1,4-elimination of the C-3 phosphate and the C-6 proR hydrogen from 5-enolpyruvylshikimate-3-phosphate (EPSP) to yield chorismate, which is the branch point compound that serves as the starting substrate for the three terminal pathways of aromatic amino acid biosynthesis. This reaction introduces a second double bond into the aromatic ring system. This is Chorismate synthase from Shigella flexneri.